The following is a 577-amino-acid chain: MKKLYWIILIAVVLACSGILMSLHLSVTKEEMTYPSFLDAVNQNQVASVQFKENDSTLKVILNSDKDTTYIVPNPKTENFTEFLLLRNIKVDNSDSYSATKVIQIILIITVGTGVFLFIRTSGGKDKPLMKDAAKNKKAENRVKLGDVAGNAEAKSMVGDIIDFIKEPEKYSALGARMPKGVMLYGPPGTGKTLIAKAIATEAGVPFYAMSGSDFVQMYVGVGASRIRTLFNKAKKSEKAVIFIDEIDAIGKKRARSTSASNDERDQTLNALLTEMSGFHENKGIVVIGATNRLDTLDEALLRPGRFDRQIEVGLPDILARKKILKLYGDKKPLGDDVDLEVLAKNTVSFSGAMLENLLNEAAIQAANEKSSYIQSSHVDKAFYTVIAGSPLQDRSFISEKDKSITAYHEAGHALATKLLQPEQYISKVTIIPSVKGAGGFNLSIPKDSLYQSKRQILCSIQILLAGRVAEELIFGEEEITTGASNDIQKASAMLVDYLNKYGMDDEMGLFSTVVLEDQYDTDFLNKCRNQMHALYDTTKKLMTENKKLLIEITNELLEKESLKGEDIDRICLKEAV.

Residues 1 to 3 (MKK) lie on the Cytoplasmic side of the membrane. The helical transmembrane segment at 4–24 (LYWIILIAVVLACSGILMSLH) threads the bilayer. Over 25–98 (LSVTKEEMTY…IKVDNSDSYS (74 aa)) the chain is Extracellular. The chain crosses the membrane as a helical span at residues 99-119 (ATKVIQIILIITVGTGVFLFI). Topologically, residues 120-577 (RTSGGKDKPL…IDRICLKEAV (458 aa)) are cytoplasmic. 186–193 (GPPGTGKT) serves as a coordination point for ATP. Zn(2+) is bound at residue histidine 409. Glutamate 410 is a catalytic residue. Zn(2+)-binding residues include histidine 413 and aspartate 487.

It in the central section; belongs to the AAA ATPase family. The protein in the C-terminal section; belongs to the peptidase M41 family. In terms of assembly, homohexamer. Zn(2+) is required as a cofactor.

It localises to the cell membrane. Acts as a processive, ATP-dependent zinc metallopeptidase for both cytoplasmic and membrane proteins. Plays a role in the quality control of integral membrane proteins. The protein is ATP-dependent zinc metalloprotease FtsH of Lachnoclostridium phytofermentans (strain ATCC 700394 / DSM 18823 / ISDg) (Clostridium phytofermentans).